Consider the following 447-residue polypeptide: N-succinylarginine dihydrolase (447 aa).

Residues 21 to 30, asparagine 112, and 139 to 140 each bind substrate; these read AGLAHGNVAS and HR. The active site involves glutamate 176. Substrate is bound at residue arginine 215. The active site involves histidine 251. Residues aspartate 253 and asparagine 364 each contribute to the substrate site. The Nucleophile role is filled by cysteine 370.

Belongs to the succinylarginine dihydrolase family. In terms of assembly, homodimer.

The catalysed reaction is N(2)-succinyl-L-arginine + 2 H2O + 2 H(+) = N(2)-succinyl-L-ornithine + 2 NH4(+) + CO2. The protein operates within amino-acid degradation; L-arginine degradation via AST pathway; L-glutamate and succinate from L-arginine: step 2/5. Its function is as follows. Catalyzes the hydrolysis of N(2)-succinylarginine into N(2)-succinylornithine, ammonia and CO(2). The protein is N-succinylarginine dihydrolase of Chromohalobacter salexigens (strain ATCC BAA-138 / DSM 3043 / CIP 106854 / NCIMB 13768 / 1H11).